We begin with the raw amino-acid sequence, 542 residues long: Putative selenium-binding protein (542 aa).

This sequence belongs to the selenium-binding protein family.

This Caenorhabditis elegans protein is Putative selenium-binding protein.